A 268-amino-acid chain; its full sequence is 1,4-dihydroxy-2-naphthoyl-CoA synthase (268 aa).

Substrate is bound by residues 30-31 (VL), 70-74 (VGGDQ), 114-118 (YAVGG), serine 140, and serine 146. 139–141 (QSG) provides a ligand contact to hydrogencarbonate.

This sequence belongs to the enoyl-CoA hydratase/isomerase family. MenB subfamily. Hydrogencarbonate is required as a cofactor.

It localises to the plastid. It is found in the chloroplast. The enzyme catalyses 2-succinylbenzoyl-CoA + H(+) = 1,4-dihydroxy-2-naphthoyl-CoA + H2O. It functions in the pathway quinol/quinone metabolism; 1,4-dihydroxy-2-naphthoate biosynthesis; 1,4-dihydroxy-2-naphthoate from chorismate: step 6/7. The protein operates within quinol/quinone metabolism; menaquinone biosynthesis. Functionally, converts o-succinylbenzoyl-CoA (OSB-CoA) to 1,4-dihydroxy-2-naphthoyl-CoA (DHNA-CoA). The polypeptide is 1,4-dihydroxy-2-naphthoyl-CoA synthase (menB) (Cyanidium caldarium (Red alga)).